A 373-amino-acid chain; its full sequence is 3 beta-hydroxysteroid dehydrogenase/Delta 5--&gt;4-isomerase type 6 (373 aa).

Catalysis depends on tyrosine 155, which acts as the Proton acceptor. Lysine 159 serves as a coordination point for NAD(+). The helical transmembrane segment at 288 to 308 (VPLLYWLAFMLETVSFLLSPI) threads the bilayer.

It belongs to the 3-beta-HSD family. As to expression, expressed in skin and testis.

The protein resides in the endoplasmic reticulum membrane. The protein localises to the mitochondrion membrane. It carries out the reaction a 3beta-hydroxy-Delta(5)-steroid + NAD(+) = a 3-oxo-Delta(5)-steroid + NADH + H(+). The enzyme catalyses a 3-oxo-Delta(5)-steroid = a 3-oxo-Delta(4)-steroid. It participates in lipid metabolism; steroid biosynthesis. Functionally, 3-beta-HSD is a bifunctional enzyme, that catalyzes the oxidative conversion of Delta(5)-ene-3-beta-hydroxy steroid, and the oxidative conversion of ketosteroids. The 3-beta-HSD enzymatic system plays a crucial role in the biosynthesis of all classes of hormonal steroids. May be involved in local production of progesterone. This chain is 3 beta-hydroxysteroid dehydrogenase/Delta 5--&gt;4-isomerase type 6 (Hsd3b6), found in Mus musculus (Mouse).